We begin with the raw amino-acid sequence, 281 residues long: 2,3,4,5-tetrahydropyridine-2,6-dicarboxylate N-succinyltransferase (281 aa).

Residues Arg-108 and Asp-145 each coordinate substrate.

Belongs to the transferase hexapeptide repeat family. As to quaternary structure, homotrimer.

The protein localises to the cytoplasm. The catalysed reaction is (S)-2,3,4,5-tetrahydrodipicolinate + succinyl-CoA + H2O = (S)-2-succinylamino-6-oxoheptanedioate + CoA. The protein operates within amino-acid biosynthesis; L-lysine biosynthesis via DAP pathway; LL-2,6-diaminopimelate from (S)-tetrahydrodipicolinate (succinylase route): step 1/3. In Rhodopseudomonas palustris (strain ATCC BAA-98 / CGA009), this protein is 2,3,4,5-tetrahydropyridine-2,6-dicarboxylate N-succinyltransferase.